The primary structure comprises 493 residues: ATP-dependent RNA helicase dbp3 (493 aa).

Positions 1 to 38 (MTKRDYQNDTTAESRPTKKSKGEKKVKETKEKKEKKVK) are disordered. A compositionally biased stretch (basic and acidic residues) spans 23 to 34 (EKKVKETKEKKE). Residues 97–105 (SFKSPTSIQ) carry the Q motif motif. The Helicase ATP-binding domain maps to 109-285 (WPLLFGGRDV…STFMSSPVTV (177 aa)). Residue 122 to 129 (AETGSGKT) participates in ATP binding. The DEAD box signature appears at 232-235 (DEAD). The 147-residue stretch at 316–462 (RLVQLLKQHQ…EVPEELLKFG (147 aa)) folds into the Helicase C-terminal domain.

It belongs to the DEAD box helicase family. DDX5/DBP2 subfamily.

It is found in the nucleus. It localises to the nucleolus. The enzyme catalyses ATP + H2O = ADP + phosphate + H(+). Its function is as follows. ATP-dependent RNA helicase required for 60S ribosomal subunit synthesis. Involved in efficient pre-rRNA processing, predominantly at site A3, which is necessary for the normal formation of 25S and 5.8S rRNAs. This chain is ATP-dependent RNA helicase dbp3 (dbp3), found in Aspergillus terreus (strain NIH 2624 / FGSC A1156).